The following is a 137-amino-acid chain: MGENQETQKSFLETVKFDSNGLVPAIVQDHETGKVLMMAWMNLESLKMTLEKKKACYWSRSRNKLWLKGESSGNMQEVHDILIDCDGDTLLLKVSQKGGACHVGYHSCFYRRTVDGESMEICDTLMFDPEEVYGKQS.

Position 84 (aspartate 84) interacts with Mg(2+). A Zn(2+)-binding site is contributed by cysteine 85. Residues aspartate 86 and aspartate 88 each coordinate Mg(2+). Zn(2+) contacts are provided by cysteine 101 and cysteine 108.

The protein belongs to the PRA-CH family. Homodimer. Requires Mg(2+) as cofactor. The cofactor is Zn(2+).

Its subcellular location is the cytoplasm. The catalysed reaction is 1-(5-phospho-beta-D-ribosyl)-5'-AMP + H2O = 1-(5-phospho-beta-D-ribosyl)-5-[(5-phospho-beta-D-ribosylamino)methylideneamino]imidazole-4-carboxamide. Its pathway is amino-acid biosynthesis; L-histidine biosynthesis; L-histidine from 5-phospho-alpha-D-ribose 1-diphosphate: step 3/9. Its function is as follows. Catalyzes the hydrolysis of the adenine ring of phosphoribosyl-AMP. The chain is Phosphoribosyl-AMP cyclohydrolase from Chlorobaculum tepidum (strain ATCC 49652 / DSM 12025 / NBRC 103806 / TLS) (Chlorobium tepidum).